Here is a 96-residue protein sequence, read N- to C-terminus: UPF0235 protein YggU (96 aa).

This sequence belongs to the UPF0235 family.

The protein is UPF0235 protein YggU of Salmonella arizonae (strain ATCC BAA-731 / CDC346-86 / RSK2980).